Reading from the N-terminus, the 165-residue chain is SsrA-binding protein (165 aa).

The segment at 141–165 (KLHDKRENEKRKQSEREVKSALARY) is disordered. Over residues 144–159 (DKRENEKRKQSEREVK) the composition is skewed to basic and acidic residues.

It belongs to the SmpB family.

The protein resides in the cytoplasm. In terms of biological role, required for rescue of stalled ribosomes mediated by trans-translation. Binds to transfer-messenger RNA (tmRNA), required for stable association of tmRNA with ribosomes. tmRNA and SmpB together mimic tRNA shape, replacing the anticodon stem-loop with SmpB. tmRNA is encoded by the ssrA gene; the 2 termini fold to resemble tRNA(Ala) and it encodes a 'tag peptide', a short internal open reading frame. During trans-translation Ala-aminoacylated tmRNA acts like a tRNA, entering the A-site of stalled ribosomes, displacing the stalled mRNA. The ribosome then switches to translate the ORF on the tmRNA; the nascent peptide is terminated with the 'tag peptide' encoded by the tmRNA and targeted for degradation. The ribosome is freed to recommence translation, which seems to be the essential function of trans-translation. The polypeptide is SsrA-binding protein (Prochlorococcus marinus (strain SARG / CCMP1375 / SS120)).